The sequence spans 374 residues: DNA replication and repair protein RecF (374 aa).

Glycine 34 to threonine 41 is a binding site for ATP.

Belongs to the RecF family.

Its subcellular location is the cytoplasm. Functionally, the RecF protein is involved in DNA metabolism; it is required for DNA replication and normal SOS inducibility. RecF binds preferentially to single-stranded, linear DNA. It also seems to bind ATP. The sequence is that of DNA replication and repair protein RecF from Rhizobium johnstonii (strain DSM 114642 / LMG 32736 / 3841) (Rhizobium leguminosarum bv. viciae).